The chain runs to 90 residues: Translation initiation factor IF-1 2 (90 aa).

The 72-residue stretch at 1–72 (MAKEELLELD…TKGRINFRHK (72 aa)) folds into the S1-like domain.

It belongs to the IF-1 family. Component of the 30S ribosomal translation pre-initiation complex which assembles on the 30S ribosome in the order IF-2 and IF-3, IF-1 and N-formylmethionyl-tRNA(fMet); mRNA recruitment can occur at any time during PIC assembly.

It localises to the cytoplasm. In terms of biological role, one of the essential components for the initiation of protein synthesis. Stabilizes the binding of IF-2 and IF-3 on the 30S subunit to which N-formylmethionyl-tRNA(fMet) subsequently binds. Helps modulate mRNA selection, yielding the 30S pre-initiation complex (PIC). Upon addition of the 50S ribosomal subunit IF-1, IF-2 and IF-3 are released leaving the mature 70S translation initiation complex. This is Translation initiation factor IF-1 2 from Paraburkholderia xenovorans (strain LB400).